Here is a 241-residue protein sequence, read N- to C-terminus: Pyridoxal phosphate phosphatase PHOSPHO2 (241 aa).

The active-site Nucleophile is Asp-8. The Mg(2+) site is built by Asp-8 and Asp-10. Asp-10 (proton donor) is an active-site residue. 2 residues coordinate substrate: Asp-19 and Asp-99. Asp-179 lines the Mg(2+) pocket.

This sequence belongs to the HAD-like hydrolase superfamily. PHOSPHO family. It depends on Mg(2+) as a cofactor.

It catalyses the reaction pyridoxal 5'-phosphate + H2O = pyridoxal + phosphate. Functionally, phosphatase that has high activity toward pyridoxal 5'-phosphate (PLP). Also active at much lower level toward pyrophosphate, phosphoethanolamine (PEA), phosphocholine (PCho), phospho-l-tyrosine, fructose-6-phosphate, p-nitrophenyl phosphate, and h-glycerophosphate. This Homo sapiens (Human) protein is Pyridoxal phosphate phosphatase PHOSPHO2 (PHOSPHO2).